A 468-amino-acid polypeptide reads, in one-letter code: Tyramine receptor tyra-2 (468 aa).

Residues 1–23 lie on the Extracellular side of the membrane; sequence MMSSYVMSPVDETYTLFQILKGS. A helical transmembrane segment spans residues 24–43; sequence ALFLLVLWTIFANSLVFIVL. Topologically, residues 44–54 are cytoplasmic; it reads YKNPRLQTVPN. Residues 55–77 form a helical membrane-spanning segment; that stretch reads LLVGNLAFSDLALGLIVLPLSSV. Residues 78–91 lie on the Extracellular side of the membrane; the sequence is YAIAGEWVFPDALC. Residues Cys91 and Cys177 are joined by a disulfide bond. Residues 92–114 form a helical membrane-spanning segment; the sequence is EVFVSADILCSTASIWNLSIVGL. Residues 115-134 are Cytoplasmic-facing; it reads DRYWAITSPVAYMSKRNKRT. Residues 135 to 157 traverse the membrane as a helical segment; it reads AGIMILSVWISSALISLAPLLGW. At 158–186 the chain is on the extracellular side; sequence KQTAQTPNLIYEKNNTVRQCTFLDLPSYT. Asn171 carries an N-linked (GlcNAc...) asparagine glycan. The chain crosses the membrane as a helical span at residues 187 to 209; the sequence is VYSATGSFFIPTLLMFFVYFKIY. Residues 210 to 387 are Cytoplasmic-facing; sequence QAFAKHRARQ…SAAKERRGVK (178 aa). The segment at 252–306 is disordered; the sequence is DEFAKEEEEEEDSESSGQVENGLGNGNDAIIEEDECEDEDSDEKRDDHTSMTTVT. Acidic residues-rich tracts occupy residues 255 to 265 and 281 to 292; these read AKEEEEEEDSE and IIEEDECEDEDS. Residues 388-410 form a helical membrane-spanning segment; it reads VLGIILGCFTVCWAPFFTMYVLV. The Extracellular segment spans residues 411–424; sequence QFCKDCSPNAHIEM. A helical transmembrane segment spans residues 425-444; the sequence is FITWLGYSNSAMNPIIYTVF. The Cytoplasmic segment spans residues 445–468; it reads NRDYQIALKRLFTSEKKPSSTSRV.

It belongs to the G-protein coupled receptor 1 family. As to expression, expressed in the pharyngeal neurons, MCL/R and NSML/R and the AS group of amphidial sensory neurons, ASEL/R, AGSL/R, ASHL/R and ASIL/R.

It is found in the cell membrane. In terms of biological role, G-protein coupled receptor for tyramine, a known neurotransmitter and neuromodulator and direct precursor of octopamine. Expression in amphidial sensory neurons suggests a role in chemosensation. In Caenorhabditis elegans, this protein is Tyramine receptor tyra-2 (tyra-2).